Consider the following 166-residue polypeptide: Lipoprotein signal peptidase (166 aa).

3 helical membrane passes run 12 to 32 (WLWL…LILQ), 70 to 90 (WFFA…MYRS), and 102 to 122 (ALII…GFVV). Residues aspartate 123 and aspartate 141 contribute to the active site. A helical membrane pass occupies residues 137–157 (FNLADTAICIGAALIVLEGFL).

It belongs to the peptidase A8 family.

It is found in the cell inner membrane. It carries out the reaction Release of signal peptides from bacterial membrane prolipoproteins. Hydrolyzes -Xaa-Yaa-Zaa-|-(S,diacylglyceryl)Cys-, in which Xaa is hydrophobic (preferably Leu), and Yaa (Ala or Ser) and Zaa (Gly or Ala) have small, neutral side chains.. It participates in protein modification; lipoprotein biosynthesis (signal peptide cleavage). Functionally, this protein specifically catalyzes the removal of signal peptides from prolipoproteins. The chain is Lipoprotein signal peptidase from Salmonella paratyphi A (strain ATCC 9150 / SARB42).